The following is a 416-amino-acid chain: MSLVAIGINHKTATVDLREKVAFSPDKIHDAMKSLASRTRSGEAVIVSTCNRTELYCNNGDEADIIAWLEEYHGLDHKDVAPCLYNYHGQDAVRHLMRVASGLDSLILGEPQILGQVKQAFVKAKEAGTVALTIDRLFQNTFSVAKKVRTDTEIGAAAVSVAFAAVSMAKHIFSSISTTKVLLIGAGETIELVAKHLKDNGVASMVVANRTLERAQGMCEEFGATAITLAQIPDYLPKADIVISSTASPLPILGKGMVEKALKQRRHQPMLLVDIAVPRDIEPEVADLDDAFLYTVDDLHSIIEQNMASRKEAAEQAEVITEEQSFLFMDWIRSLESVDSIREYRSQSMAVKDELVERALNKLAQGSDTEQVLIELANRLTNKLIHAPTQALTAASRQGDLNTLGQLRSALGLDKH.

Substrate-binding positions include threonine 49–arginine 52, serine 105, glutamate 110–glutamine 112, and glutamine 116. Cysteine 50 functions as the Nucleophile in the catalytic mechanism. Glycine 185–isoleucine 190 is an NADP(+) binding site.

This sequence belongs to the glutamyl-tRNA reductase family. As to quaternary structure, homodimer.

The catalysed reaction is (S)-4-amino-5-oxopentanoate + tRNA(Glu) + NADP(+) = L-glutamyl-tRNA(Glu) + NADPH + H(+). It participates in porphyrin-containing compound metabolism; protoporphyrin-IX biosynthesis; 5-aminolevulinate from L-glutamyl-tRNA(Glu): step 1/2. Catalyzes the NADPH-dependent reduction of glutamyl-tRNA(Glu) to glutamate 1-semialdehyde (GSA). This Shewanella baltica (strain OS185) protein is Glutamyl-tRNA reductase.